The chain runs to 844 residues: Proto-oncogene vav (844 aa).

Positions methionine 1–proline 119 constitute a Calponin-homology (CH) domain. A DH domain is found at lysine 193–valine 372. The PH domain occupies arginine 401–serine 503. The Phorbol-ester/DAG-type zinc-finger motif lies at glycine 514 to cysteine 563. The segment at glycine 567–asparagine 589 is disordered. Residues leucine 591 to histidine 659 enclose the SH3 1 domain. An SH2 domain is found at tryptophan 670–phenylalanine 764. One can recognise an SH3 2 domain in the interval lysine 781–serine 841. A phosphotyrosine mark is found at tyrosine 825 and tyrosine 843.

In terms of assembly, interacts with SHB. Interacts with APS, DOCK2, GRB2, GRB3, DOCK2, SLA, TEC and ZNF655/VIK. Interacts with SIAH2; without leading to its degradation. Associates with BLNK, PLCG1, GRB2 and NCK1 in a B-cell antigen receptor-dependent fashion. Interacts with CBLB; which inhibits tyrosine phosphorylation and down-regulates activity. May interact with CCPG1. Interacts with CLNK. Interacts with THEMIS2. Interacts with NEK3 and this interaction is prolactin-dependent. Interacts with ITK. Interacts with PTK2B/PYK2. Interacts with HCK. Interacts with PTK2B/PYK2. Interacts (via SH2 domain) with SYK. Interacts with ANKRD54. Interacts with CD6. Interacts with LCP2; this interaction plays a role in TCR-mediated cytokine production. Post-translationally, phosphorylated by FYN. Phosphorylated on tyrosine residues by HCK in response to IFNG and bacterial lipopolysaccharide (LPS).

In terms of biological role, couples tyrosine kinase signals with the activation of the Rho/Rac GTPases, thus leading to cell differentiation and/or proliferation. This chain is Proto-oncogene vav (VAV1), found in Bos taurus (Bovine).